Reading from the N-terminus, the 318-residue chain is Inactive dihydropteroate synthase 2 (318 aa).

Positions 1-25 are disordered; it reads MRSTPPASAGRSTPPALAGHSTPPA. One can recognise a Pterin-binding domain in the interval 42–299; the sequence is ALIMAIVNRT…EVAATRRVLE (258 aa).

It belongs to the DHPS family. In terms of assembly, homodimer.

Its function is as follows. Has very low affinity for the DHPS substrate 6-hydroxymethyl-7,8-dihydropterin-pyrophosphate, but can bind the inhibitor dapsone. Seems to lack dihydropteroate synthase activity, and does probably not function in folate metabolism. The polypeptide is Inactive dihydropteroate synthase 2 (folP2) (Mycobacterium bovis (strain ATCC BAA-935 / AF2122/97)).